The primary structure comprises 355 residues: Serine acetyltransferase 4 (355 aa).

This sequence belongs to the transferase hexapeptide repeat family. In terms of assembly, homomultimer. Localized in vascular tissues, particularly in phloem.

Its subcellular location is the cytoplasm. It catalyses the reaction L-serine + acetyl-CoA = O-acetyl-L-serine + CoA. It functions in the pathway amino-acid biosynthesis; L-cysteine biosynthesis; L-cysteine from L-serine: step 1/2. With respect to regulation, feedback inhibitions by L-Ser and acetyl-CoA. The chain is Serine acetyltransferase 4 from Arabidopsis thaliana (Mouse-ear cress).